A 1043-amino-acid polypeptide reads, in one-letter code: Liprin-alpha-4 (1043 aa).

Coiled-coil stretches lie at residues E24 to G332 and I426 to S470. The interval S498–I617 is disordered. Residue S500 is modified to Phosphoserine. Residues G505–A516 show a composition bias toward polar residues. S541 is subject to Phosphoserine. A compositionally biased stretch (basic and acidic residues) spans S544 to I555. Residues Q590–D602 are compositionally biased toward low complexity. 3 SAM domains span residues W688–L754, N803–L867, and W891–L960. Residues L864 to V890 are a coiled coil.

Belongs to the liprin family. Liprin-alpha subfamily. Forms homodimers and heterodimers with liprins-alpha and liprins-beta. Interacts with the second PTPase domain of PTPRD, PTPRF and PTPRS. Interacts with RIMS1 and RIMS2. Interacts with GIT1 and GIT2. Interacts with GRIP1. Interacts with KIF1A.

It localises to the cytoplasm. It is found in the cell surface. Functionally, may regulate the disassembly of focal adhesions. May localize receptor-like tyrosine phosphatases type 2A at specific sites on the plasma membrane, possibly regulating their interaction with the extracellular environment and their association with substrates. This is Liprin-alpha-4 (Ppfia4) from Rattus norvegicus (Rat).